A 312-amino-acid chain; its full sequence is Golgi to ER traffic protein 2 (312 aa).

Topologically, residues 1-175 (MSDSPSISAE…VQYNTYRHQV (175 aa)) are cytoplasmic. A helical membrane pass occupies residues 176–196 (WKFRFLAVRYFALLANFIYHF). Residues 197 to 224 (YIIGDSISFASSSHQFIRELIPVEPARS) are Lumenal-facing. Residues 225 to 244 (FFTLFSTIEVVIIASYYFLG) form a helical membrane-spanning segment. Over 245–288 (TKEGFFSTATSNNFVVKLLDMGSMVLPQLQQFKTIAVRLLGYYE) the chain is Cytoplasmic. The chain crosses the membrane as a helical span at residues 289 to 309 (LLAVLLGDLSLVVVLFGLHSV). The Lumenal segment spans residues 310 to 312 (LGN).

This sequence belongs to the GET2 family. Component of the Golgi to ER traffic (GET) complex, which is composed of GET1, GET2 and GET3. Within the complex, GET1 and GET2 form a heterotetramer which is stabilized by phosphatidylinositol binding and which binds to the GET3 homodimer.

The protein resides in the endoplasmic reticulum membrane. The protein localises to the golgi apparatus membrane. Its function is as follows. Required for the post-translational delivery of tail-anchored (TA) proteins to the endoplasmic reticulum. Together with GET1, acts as a membrane receptor for soluble GET3, which recognizes and selectively binds the transmembrane domain of TA proteins in the cytosol. The GET complex cooperates with the HDEL receptor ERD2 to mediate the ATP-dependent retrieval of resident ER proteins that contain a C-terminal H-D-E-L retention signal from the Golgi to the ER. This is Golgi to ER traffic protein 2 from Scheffersomyces stipitis (strain ATCC 58785 / CBS 6054 / NBRC 10063 / NRRL Y-11545) (Yeast).